Reading from the N-terminus, the 373-residue chain is UDP-N-acetylglucosamine--N-acetylmuramyl-(pentapeptide) pyrophosphoryl-undecaprenol N-acetylglucosamine transferase (373 aa).

UDP-N-acetyl-alpha-D-glucosamine-binding positions include Thr13 to Gly15, Asn124, Arg165, Ser192, and Gln293.

This sequence belongs to the glycosyltransferase 28 family. MurG subfamily.

The protein localises to the cell inner membrane. It catalyses the reaction di-trans,octa-cis-undecaprenyl diphospho-N-acetyl-alpha-D-muramoyl-L-alanyl-D-glutamyl-meso-2,6-diaminopimeloyl-D-alanyl-D-alanine + UDP-N-acetyl-alpha-D-glucosamine = di-trans,octa-cis-undecaprenyl diphospho-[N-acetyl-alpha-D-glucosaminyl-(1-&gt;4)]-N-acetyl-alpha-D-muramoyl-L-alanyl-D-glutamyl-meso-2,6-diaminopimeloyl-D-alanyl-D-alanine + UDP + H(+). Its pathway is cell wall biogenesis; peptidoglycan biosynthesis. Its function is as follows. Cell wall formation. Catalyzes the transfer of a GlcNAc subunit on undecaprenyl-pyrophosphoryl-MurNAc-pentapeptide (lipid intermediate I) to form undecaprenyl-pyrophosphoryl-MurNAc-(pentapeptide)GlcNAc (lipid intermediate II). The protein is UDP-N-acetylglucosamine--N-acetylmuramyl-(pentapeptide) pyrophosphoryl-undecaprenol N-acetylglucosamine transferase of Sinorhizobium fredii (strain NBRC 101917 / NGR234).